Reading from the N-terminus, the 48-residue chain is Photosystem II reaction center protein K (48 aa).

A propeptide spanning residues 1 to 11 is cleaved from the precursor; sequence MFPSTNQEVLA. Residues 23–43 form a helical membrane-spanning segment; the sequence is IVDVLPIIPLLFLLLAFVWQA.

This sequence belongs to the PsbK family. In terms of assembly, PSII is composed of 1 copy each of membrane proteins PsbA, PsbB, PsbC, PsbD, PsbE, PsbF, PsbH, PsbI, PsbJ, PsbK, PsbL, PsbM, PsbT, PsbY, PsbZ, Psb30/Ycf12, at least 3 peripheral proteins of the oxygen-evolving complex and a large number of cofactors. It forms dimeric complexes.

The protein localises to the plastid. Its subcellular location is the chloroplast thylakoid membrane. Its function is as follows. One of the components of the core complex of photosystem II (PSII). PSII is a light-driven water:plastoquinone oxidoreductase that uses light energy to abstract electrons from H(2)O, generating O(2) and a proton gradient subsequently used for ATP formation. It consists of a core antenna complex that captures photons, and an electron transfer chain that converts photonic excitation into a charge separation. The protein is Photosystem II reaction center protein K of Euglena sanguinea.